The primary structure comprises 231 residues: ADP-ribose pyrophosphatase (231 aa).

N-acetylserine is present on Phe-2. Substrate contacts are provided by residues Trp-46, 64-65 (WD), Arg-69, and Arg-103. Residues 75–214 (GGVDGIGILT…DQQGYKLDAR (140 aa)) enclose the Nudix hydrolase domain. Ala-115 contacts Mg(2+). The Nudix box signature appears at 116-137 (GLIDAGEDIDTAALRELKEETG). Residue Leu-117 participates in substrate binding. 2 residues coordinate Mg(2+): Glu-131 and Glu-135. Asp-152 contributes to the substrate binding site. Glu-185 lines the Mg(2+) pocket.

This sequence belongs to the Nudix hydrolase family. NudF subfamily. It depends on Mg(2+) as a cofactor. Mn(2+) is required as a cofactor.

The enzyme catalyses ADP-D-ribose + H2O = D-ribose 5-phosphate + AMP + 2 H(+). The polypeptide is ADP-ribose pyrophosphatase (YSA1) (Saccharomyces cerevisiae (strain ATCC 204508 / S288c) (Baker's yeast)).